The chain runs to 70 residues: Cold shock-like protein CspJ (70 aa).

Residues 7-67 (GLVKWFNPEK…GPKGPSAVNV (61 aa)) form the CSD domain.

It localises to the cytoplasm. This chain is Cold shock-like protein CspJ (cspJ), found in Salmonella typhimurium (strain SL1344).